The sequence spans 310 residues: tRNA dimethylallyltransferase (310 aa).

15-22 (GATASGKT) is a binding site for ATP. Substrate is bound at residue 17-22 (TASGKT).

It belongs to the IPP transferase family. In terms of assembly, monomer. Requires Mg(2+) as cofactor.

The catalysed reaction is adenosine(37) in tRNA + dimethylallyl diphosphate = N(6)-dimethylallyladenosine(37) in tRNA + diphosphate. Catalyzes the transfer of a dimethylallyl group onto the adenine at position 37 in tRNAs that read codons beginning with uridine, leading to the formation of N6-(dimethylallyl)adenosine (i(6)A). The chain is tRNA dimethylallyltransferase from Nocardioides sp. (strain ATCC BAA-499 / JS614).